The primary structure comprises 61 residues: Metallothionein-1B (61 aa).

The beta stretch occupies residues M1–C29. A divalent metal cation-binding residues include C5, C7, C13, C15, C19, C21, C24, C26, C29, C33, C34, C36, C37, C41, C44, C48, C50, C57, C59, and C60. Residues K30–A61 form an alpha region.

Belongs to the metallothionein superfamily. Type 1 family.

Its function is as follows. Metallothioneins have a high content of cysteine residues that bind various heavy metals; these proteins are transcriptionally regulated by both heavy metals and glucocorticoids. This chain is Metallothionein-1B (MT1B), found in Ovis aries (Sheep).